Consider the following 301-residue polypeptide: Probable DNA-directed RNA polymerase III subunit rpc6 (301 aa).

Belongs to the eukaryotic RPC34/RPC39 RNA polymerase subunit family. Component of the RNA polymerase III (Pol III) complex consisting of 17 subunits. Interacts with TFIIB.

It localises to the nucleus. In terms of biological role, DNA-dependent RNA polymerase catalyzes the transcription of DNA into RNA using the four ribonucleoside triphosphates as substrates. Specific peripheric component of RNA polymerase III which synthesizes small RNAs, such as 5S rRNA and tRNAs. This chain is Probable DNA-directed RNA polymerase III subunit rpc6 (rpc6), found in Schizosaccharomyces pombe (strain 972 / ATCC 24843) (Fission yeast).